Consider the following 177-residue polypeptide: NADH-quinone oxidoreductase subunit B (177 aa).

Residues C56, C57, C121, and C151 each coordinate [4Fe-4S] cluster.

This sequence belongs to the complex I 20 kDa subunit family. In terms of assembly, NDH-1 is composed of 14 different subunits. Subunits NuoB, C, D, E, F, and G constitute the peripheral sector of the complex. [4Fe-4S] cluster is required as a cofactor.

Its subcellular location is the cell inner membrane. The enzyme catalyses a quinone + NADH + 5 H(+)(in) = a quinol + NAD(+) + 4 H(+)(out). Its function is as follows. NDH-1 shuttles electrons from NADH, via FMN and iron-sulfur (Fe-S) centers, to quinones in the respiratory chain. Couples the redox reaction to proton translocation (for every two electrons transferred, four hydrogen ions are translocated across the cytoplasmic membrane), and thus conserves the redox energy in a proton gradient. The chain is NADH-quinone oxidoreductase subunit B from Ruegeria pomeroyi (strain ATCC 700808 / DSM 15171 / DSS-3) (Silicibacter pomeroyi).